The sequence spans 392 residues: NADH-quinone oxidoreductase subunit D (392 aa).

The protein belongs to the complex I 49 kDa subunit family. In terms of assembly, NDH-1 is composed of 14 different subunits. Subunits NuoB, C, D, E, F, and G constitute the peripheral sector of the complex.

The protein resides in the cell inner membrane. It carries out the reaction a quinone + NADH + 5 H(+)(in) = a quinol + NAD(+) + 4 H(+)(out). Its function is as follows. NDH-1 shuttles electrons from NADH, via FMN and iron-sulfur (Fe-S) centers, to quinones in the respiratory chain. The immediate electron acceptor for the enzyme in this species is believed to be ubiquinone. Couples the redox reaction to proton translocation (for every two electrons transferred, four hydrogen ions are translocated across the cytoplasmic membrane), and thus conserves the redox energy in a proton gradient. The sequence is that of NADH-quinone oxidoreductase subunit D from Parvibaculum lavamentivorans (strain DS-1 / DSM 13023 / NCIMB 13966).